We begin with the raw amino-acid sequence, 78 residues long: Translation initiation factor IF-1 (78 aa).

The S1-like domain maps to 4–78 (KFNNQAKQDK…LKLGRIIGRK (75 aa)).

It belongs to the IF-1 family. Component of the 30S ribosomal translation pre-initiation complex which assembles on the 30S ribosome in the order IF-2 and IF-3, IF-1 and N-formylmethionyl-tRNA(fMet); mRNA recruitment can occur at any time during PIC assembly.

The protein resides in the cytoplasm. Its function is as follows. One of the essential components for the initiation of protein synthesis. Stabilizes the binding of IF-2 and IF-3 on the 30S subunit to which N-formylmethionyl-tRNA(fMet) subsequently binds. Helps modulate mRNA selection, yielding the 30S pre-initiation complex (PIC). Upon addition of the 50S ribosomal subunit IF-1, IF-2 and IF-3 are released leaving the mature 70S translation initiation complex. The sequence is that of Translation initiation factor IF-1 from Mycoplasma pneumoniae (strain ATCC 29342 / M129 / Subtype 1) (Mycoplasmoides pneumoniae).